Here is a 406-residue protein sequence, read N- to C-terminus: Cysteine desulfurase (406 aa).

Lys-226 carries the post-translational modification N6-(pyridoxal phosphate)lysine. The Cysteine persulfide intermediate role is filled by Cys-364.

This sequence belongs to the class-V pyridoxal-phosphate-dependent aminotransferase family. Csd subfamily. In terms of assembly, homodimer. Interacts with SufE and the SufBCD complex composed of SufB, SufC and SufD. The interaction with SufE is required to mediate the direct transfer of the sulfur atom from the S-sulfanylcysteine. Pyridoxal 5'-phosphate is required as a cofactor.

Its subcellular location is the cytoplasm. The catalysed reaction is (sulfur carrier)-H + L-cysteine = (sulfur carrier)-SH + L-alanine. The enzyme catalyses L-selenocysteine + AH2 = hydrogenselenide + L-alanine + A + H(+). Its pathway is cofactor biosynthesis; iron-sulfur cluster biosynthesis. Functionally, cysteine desulfurases mobilize the sulfur from L-cysteine to yield L-alanine, an essential step in sulfur metabolism for biosynthesis of a variety of sulfur-containing biomolecules. Component of the suf operon, which is activated and required under specific conditions such as oxidative stress and iron limitation. Acts as a potent selenocysteine lyase in vitro, that mobilizes selenium from L-selenocysteine. Selenocysteine lyase activity is however unsure in vivo. This is Cysteine desulfurase from Salmonella choleraesuis (strain SC-B67).